A 416-amino-acid chain; its full sequence is Diaminobutyrate--2-oxoglutarate transaminase (416 aa).

Residue K263 is modified to N6-(pyridoxal phosphate)lysine.

Belongs to the class-III pyridoxal-phosphate-dependent aminotransferase family. It depends on pyridoxal 5'-phosphate as a cofactor.

The enzyme catalyses L-2,4-diaminobutanoate + 2-oxoglutarate = L-aspartate 4-semialdehyde + L-glutamate. Its pathway is amine and polyamine biosynthesis; ectoine biosynthesis; L-ectoine from L-aspartate 4-semialdehyde: step 1/3. In terms of biological role, catalyzes reversively the conversion of L-aspartate beta-semialdehyde (ASA) to L-2,4-diaminobutyrate (DABA) by transamination with L-glutamate. The sequence is that of Diaminobutyrate--2-oxoglutarate transaminase (ectB) from Virgibacillus pantothenticus.